We begin with the raw amino-acid sequence, 864 residues long: MSKSAVSPMMQQYLGIKAQHTDKLVFYRMGDFYEMFFDDAVEAAKLLDITLTTRGQMDGVPIKMAGVPFHAAEQYLARLVKLGKSVAICEQVGEVGAGKGPVERKVVRIVTPGTLTDSALLEDKETNRIVAVSPDKKYIGLAWASLQSGEFKTKLTTVDKLDDELARLQAAEILLPDSKNTPQLQTASGVTRLNAWQFAADAGEKLLTEYFGCQDLRGFGLDGKEHAVAIGAAGALLNYIRLTQNLMPQHLDGLSLETDSQYIGMDAATRRNLEITQTLSGKKSPTLMSTLDLCATHMGSRLLALWLHHPLRNRAHIRARQEAVAALESQYKPLQCRLKNIADIERIAARIAVGNARPRDLAALRDSLFALSEIDLSANGSSLLETLKAVFPETLPVAETLKAAVMPEPAVWLKDGNVINHGFHPELDELRRIQNHGDEFLLDLEAKERERTGLSTLKVEFNRVHGFYIELSKTQAEQAPADYQRRQTLKNAERFITPELKAFEDKVMTAQEQALALEKQLFDGVLKNLQTALPQLQKAAKAAAALDVLSTFSALAKERNFVRPEFADYPVIHIENGRHPVVEQQVRHFTANHTNLDHKHRLMLLTGPNMGGKSTYMRQVALIVLLAHTGCFVPADAATIGPIDQIFTRIGASDDLASNRSTFMVEMSETAYILHHATEQSLVLMDEVGRGTSTFDGLALAHAVAEHLLQKNKSFSLFATHYFELTKLPEAHATAVNMHLSALEQGQDIVFLHHIEPGPASKSYGIAVAKLAGLPVRALKSAQKHLNELEDQAAANRPQLDIFSTMPSEKGDEPNVDSFVDKAEEKHFEGILAAALEKLDPDSLTPREALSELYRLKDLCKSVS.

607 to 614 (GPNMGGKS) lines the ATP pocket.

This sequence belongs to the DNA mismatch repair MutS family.

This protein is involved in the repair of mismatches in DNA. It is possible that it carries out the mismatch recognition step. This protein has a weak ATPase activity. This chain is DNA mismatch repair protein MutS, found in Neisseria meningitidis serogroup C (strain 053442).